The chain runs to 428 residues: Small ribosomal subunit protein uS2m (428 aa).

Positions 30 to 50 (FLSQDNFTAPPPPPTNSKKQA) are disordered.

The protein belongs to the universal ribosomal protein uS2 family. In terms of assembly, component of the mitochondrial small ribosomal subunit (mt-SSU). Mature N.crassa 74S mitochondrial ribosomes consist of a small (37S) and a large (54S) subunit. The 37S small subunit contains a 16S ribosomal RNA (16S mt-rRNA) and 32 different proteins. The 54S large subunit contains a 23S rRNA (23S mt-rRNA) and 42 different proteins.

Its subcellular location is the mitochondrion. In terms of biological role, component of the mitochondrial ribosome (mitoribosome), a dedicated translation machinery responsible for the synthesis of mitochondrial genome-encoded proteins, including at least some of the essential transmembrane subunits of the mitochondrial respiratory chain. The mitoribosomes are attached to the mitochondrial inner membrane and translation products are cotranslationally integrated into the membrane. This is Small ribosomal subunit protein uS2m (mrp4) from Neurospora crassa (strain ATCC 24698 / 74-OR23-1A / CBS 708.71 / DSM 1257 / FGSC 987).